Consider the following 201-residue polypeptide: Probable GTP-binding protein EngB (201 aa).

The region spanning 22–195 (TQPEFAFAGK…WRCIEQFLEV (174 aa)) is the EngB-type G domain. Residues 30–37 (GKSNVGKS), 57–61 (GKTQT), 75–78 (DLPG), 142–145 (TKLD), and 174–176 (FSS) each bind GTP. 2 residues coordinate Mg(2+): Ser37 and Thr59.

Belongs to the TRAFAC class TrmE-Era-EngA-EngB-Septin-like GTPase superfamily. EngB GTPase family. Mg(2+) serves as cofactor.

In terms of biological role, necessary for normal cell division and for the maintenance of normal septation. This chain is Probable GTP-binding protein EngB, found in Lachnoclostridium phytofermentans (strain ATCC 700394 / DSM 18823 / ISDg) (Clostridium phytofermentans).